Here is a 219-residue protein sequence, read N- to C-terminus: Albonoursin synthase (219 aa).

The protein belongs to the nitroreductase family. In terms of assembly, homomer. FMN is required as a cofactor. Post-translationally, the N-terminus is blocked.

It is found in the cytoplasm. The enzyme catalyses cyclo(L-phenylalanyl-L-leucyl) + 2 O2 = albonoursin + 2 H2O2. Involved in the biosynthesis of albonoursin (cyclo[(alpha,beta-dehydro-Phe)-(alpha,beta-dehydro-Leu)]), an antibacterial peptide. Catalyzes the formation of alpha,beta-dehydro-Phe (DPhe) and alpha,beta-dehydro-Leu (DLeu) residues during the biosynthesis of albonoursin. The catalytic reaction of cyclo(L-Phe-L-Leu) occurs in a two-step sequential alpha-beta-dehydrogenation leading first to cyclo(alpha,beta-dehydro-Phe-L-Leu) and finally to albonoursin. Can also use cyclo(L-Phe-L-His), cyclo(L-Trp-L-Trp), cyclo(L-Leu-L-Ala), cyclo(L-Phe-Gly), cyclo(L-Leu-Gly), cyclo(L-Ser-Gly) and cyclo(L-Glu-Gly) as substrate suggesting that the diketopiperazine ring is essential for the enzymatic reaction. This Streptomyces noursei (Streptomyces albulus) protein is Albonoursin synthase (albA).